We begin with the raw amino-acid sequence, 388 residues long: L-arabinitol 4-dehydrogenase (388 aa).

Zn(2+) is bound by residues Cys-55, His-80, Glu-81, Cys-110, Cys-113, Cys-116, Cys-124, and Glu-165. NAD(+) contacts are provided by residues 192 to 193 (PI), Asp-213, Arg-218, Ile-293, and 317 to 319 (QYR).

It belongs to the zinc-containing alcohol dehydrogenase family. In terms of assembly, homotetramer. Zn(2+) is required as a cofactor.

The enzyme catalyses L-arabinitol + NAD(+) = L-xylulose + NADH + H(+). It participates in carbohydrate degradation; L-arabinose degradation via L-arabinitol; D-xylulose 5-phosphate from L-arabinose (fungal route): step 2/5. Catalyzes the NAD-dependent oxidation of L-arabinitol to L-xylulose in the fungal L-arabinose catabolic pathway. L-arabinose catabolism is important for using plant material as a carbon source. NADP cannot act as a cosubstrate. This Talaromyces emersonii (Thermophilic fungus) protein is L-arabinitol 4-dehydrogenase (lad).